The chain runs to 57 residues: UPF0391 membrane protein RPA3029 (57 aa).

Transmembrane regions (helical) follow at residues tryptophan 6–serine 26 and isoleucine 35–phenylalanine 55.

It belongs to the UPF0391 family.

The protein localises to the cell membrane. This is UPF0391 membrane protein RPA3029 from Rhodopseudomonas palustris (strain ATCC BAA-98 / CGA009).